The chain runs to 4543 residues: Low-density lipoprotein receptor-related protein 1 (4543 aa).

The first 21 residues, 1 to 21, serve as a signal peptide directing secretion; it reads MGPLLALAGCLLALLAAPAAR. The Extracellular segment spans residues 22-4419; that stretch reads ALEAPKTCSP…EFIVGEQQSG (4398 aa). LDL-receptor class A domains follow at residues 27 to 68 and 72 to 112; these read KTCS…ICPQ and SRCQ…HCRE. 6 cysteine pairs are disulfide-bonded: cysteine 29–cysteine 42, cysteine 36–cysteine 55, cysteine 49–cysteine 66, cysteine 74–cysteine 87, cysteine 81–cysteine 100, and cysteine 94–cysteine 110. An EGF-like 1 domain is found at 113–151; the sequence is QLANCTALGCQHHCVPTLSGPACYCNNSFQLAEDRRSCK. A glycan (N-linked (GlcNAc...) asparagine) is linked at asparagine 116. 6 cysteine pairs are disulfide-bonded: cysteine 117–cysteine 126, cysteine 122–cysteine 135, cysteine 137–cysteine 150, cysteine 156–cysteine 166, cysteine 162–cysteine 175, and cysteine 177–cysteine 190. Asparagine 138 is a glycosylation site (N-linked (GlcNAc...) asparagine). An EGF-like 2; calcium-binding domain is found at 152–191; the sequence is DFDECTVYGTCSQTCTNTEGSYTCSCVEGYLLQPDNRSCK. Asparagine 187 and asparagine 276 each carry an N-linked (GlcNAc...) asparagine glycan. 3 LDL-receptor class B repeats span residues 294-336, 337-380, and 381-424; these read GNFY…DPAM, GKVF…DLVS, and RLVY…FENY. Asparagine 359 carries N-linked (GlcNAc...) asparagine glycosylation. Asparagine 448 carries N-linked (GlcNAc...) asparagine glycosylation. An EGF-like 3 domain is found at 476–522; sequence RSHACEPDQFGKPGGCSDICLLGNSHKSRTCRCRSGFSLGSDGKSCK. 3 disulfides stabilise this stretch: cysteine 480-cysteine 495, cysteine 491-cysteine 506, and cysteine 508-cysteine 521. LDL-receptor class B repeat units lie at residues 573 to 615, 616 to 661, 662 to 712, and 713 to 756; these read GFIY…DWMG, NNLY…DPLN, GWMY…DIPA, and KILY…YSSF. The N-linked (GlcNAc...) asparagine glycan is linked to asparagine 731. The 41-residue stretch at 801 to 841 folds into the EGF-like 4 domain; the sequence is GSNKCRVNNGGCSSLCLATPRGRQCACAEDQILGADSVTCE. Disulfide bonds link cysteine 805-cysteine 816, cysteine 812-cysteine 825, cysteine 827-cysteine 840, cysteine 852-cysteine 864, cysteine 859-cysteine 877, cysteine 871-cysteine 888, cysteine 893-cysteine 905, cysteine 900-cysteine 918, cysteine 912-cysteine 929, cysteine 934-cysteine 946, cysteine 941-cysteine 959, cysteine 953-cysteine 969, cysteine 974-cysteine 987, cysteine 982-cysteine 1000, cysteine 994-cysteine 1009, cysteine 1013-cysteine 1025, cysteine 1020-cysteine 1038, cysteine 1032-cysteine 1049, cysteine 1060-cysteine 1073, cysteine 1067-cysteine 1086, cysteine 1080-cysteine 1095, cysteine 1102-cysteine 1116, cysteine 1110-cysteine 1129, cysteine 1123-cysteine 1138, cysteine 1143-cysteine 1157, cysteine 1150-cysteine 1170, cysteine 1164-cysteine 1180, cysteine 1183-cysteine 1194, cysteine 1190-cysteine 1204, cysteine 1206-cysteine 1219, cysteine 1225-cysteine 1235, cysteine 1231-cysteine 1244, and cysteine 1246-cysteine 1259. LDL-receptor class A domains lie at 850–890, 891–931, 932–971, 972–1011, 1011–1051, 1058–1097, 1100–1140, and 1141–1180; these read PQCQ…LCHQ, HTCP…TCSA, RTCS…SCAY, PTCF…GCSH, HSCS…NCTN, GGCH…NCEG, HVCD…NCES, and LVCK…GELC. Tryptophan 869, aspartate 872, aspartate 874, aspartate 876, aspartate 882, and glutamate 883 together coordinate Ca(2+). Residue asparagine 926 is glycosylated (N-linked (GlcNAc...) asparagine). Residues tryptophan 1030, aspartate 1033, aspartate 1035, aspartate 1037, aspartate 1043, and glutamate 1044 each coordinate Ca(2+). Asparagine 1048 carries an N-linked (GlcNAc...) asparagine glycan. Residues tryptophan 1078, aspartate 1081, aspartate 1083, aspartate 1085, aspartate 1091, and glutamate 1092 each contribute to the Ca(2+) site. 2 N-linked (GlcNAc...) asparagine glycosylation sites follow: asparagine 1152 and asparagine 1153. EGF-like domains are found at residues 1181-1220 and 1221-1260; these read DQCS…KTCQ and IQSY…ESCR. 2 N-linked (GlcNAc...) asparagine glycosylation sites follow: asparagine 1193 and asparagine 1216. N-linked (GlcNAc...) asparagine glycosylation is present at asparagine 1305. LDL-receptor class B repeat units lie at residues 1307–1353, 1354–1396, 1397–1443, 1444–1488, and 1489–1529; these read SSLY…DWIA, GNIY…DPRY, GILF…DYLE, KRIL…YGGE, and VYWT…YHPS. N-linked (GlcNAc...) asparagine glycosylation occurs at asparagine 1509. Positions 1534–1577 constitute an EGF-like 7 domain; the sequence is APNPCEANGGKGPCSHLCLINYNRTLSCACPHLMKLDKDNTTCY. Disulfide bonds link cysteine 1538–cysteine 1551, cysteine 1547–cysteine 1561, and cysteine 1563–cysteine 1576. 4 N-linked (GlcNAc...) asparagine glycosylation sites follow: asparagine 1556, asparagine 1573, asparagine 1614, and asparagine 1643. LDL-receptor class B repeat units lie at residues 1625–1667, 1668–1711, 1712–1751, and 1752–1796; these read QRIY…DWVS, RNLF…HPLH, GKLY…DYPE, and SKLY…MGDK. Asparagine 1721, asparagine 1731, asparagine 1761, and asparagine 1823 each carry an N-linked (GlcNAc...) asparagine glycan. Positions 1842–1883 constitute an EGF-like 8 domain; it reads GSNPCSVNNGDCSQLCLPTSETSRSCMCTAGYSLKSGQQSCE. Intrachain disulfides connect cysteine 1846–cysteine 1857, cysteine 1853–cysteine 1867, and cysteine 1869–cysteine 1882. Asparagine 1929 carries N-linked (GlcNAc...) asparagine glycosylation. 4 LDL-receptor class B repeats span residues 1930–1972, 1973–2015, 2016–2059, and 2060–2103; these read DTIY…DWIA, GNIY…HPEK, GYLF…DYED, and GKLY…FEDY. Residues asparagine 1991 and asparagine 2044 are each glycosylated (N-linked (GlcNAc...) asparagine). Residues asparagine 2113 and asparagine 2123 are each glycosylated (N-linked (GlcNAc...) asparagine). Residues 2151 to 2191 form the EGF-like 9 domain; it reads GTNVCAQNNGGCQQLCLFRGGGRRTCACAHGMLSEDGVSCR. Cystine bridges form between cysteine 2155-cysteine 2166, cysteine 2162-cysteine 2176, and cysteine 2178-cysteine 2190. LDL-receptor class B repeat units follow at residues 2247–2288, 2289–2337, 2338–2382, 2383–2425, and 2426–2467; these read NRIF…HRGW, DTLY…DECQ, NLMF…DHRA, EKIY…YGDY, and IFWT…VAND. The N-linked (GlcNAc...) asparagine glycan is linked to asparagine 2466. An EGF-like 10 domain is found at 2472–2512; the sequence is ELSPCRVNNGGCQDLCLLTPKGHVNCSCRGERVLQEDFTCK. Cystine bridges form between cysteine 2476–cysteine 2487, cysteine 2483–cysteine 2497, and cysteine 2499–cysteine 2511. N-linked (GlcNAc...) asparagine glycosylation occurs at asparagine 2496. N-linked (GlcNAc...) asparagine glycosylation is present at asparagine 2515. LDL-receptor class A domains follow at residues 2516–2557, 2558–2596, 2597–2635, 2636–2684, 2688–2730, 2730–2769, and 2770–2812; these read STCN…YCSS, RKCK…PCNK, TSCA…NCTA, TDCS…NCPG, PKCP…RQDK, KFCY…RCRL, and TTCS…GCLY. 6 disulfide bridges follow: cysteine 2518-cysteine 2531, cysteine 2526-cysteine 2544, cysteine 2538-cysteine 2555, cysteine 2560-cysteine 2572, cysteine 2567-cysteine 2585, and cysteine 2579-cysteine 2594. N-linked (GlcNAc...) asparagine glycosylation occurs at asparagine 2595. 15 cysteine pairs are disulfide-bonded: cysteine 2599/cysteine 2611, cysteine 2606/cysteine 2624, cysteine 2618/cysteine 2633, cysteine 2638/cysteine 2660, cysteine 2654/cysteine 2673, cysteine 2667/cysteine 2682, cysteine 2690/cysteine 2702, cysteine 2697/cysteine 2715, cysteine 2709/cysteine 2724, cysteine 2732/cysteine 2744, cysteine 2739/cysteine 2757, cysteine 2751/cysteine 2767, cysteine 2772/cysteine 2785, cysteine 2779/cysteine 2798, and cysteine 2792/cysteine 2810. Asparagine 2614 and asparagine 2632 each carry an N-linked (GlcNAc...) asparagine glycan. Residue asparagine 2813 is glycosylated (N-linked (GlcNAc...) asparagine). 3 consecutive LDL-receptor class A domains span residues 2814 to 2853, 2854 to 2897, and 2900 to 2938; these read NTCD…ECEY, PTCG…RCSS, and SKCN…NCFI. Disulfide bonds link cysteine 2816-cysteine 2828, cysteine 2823-cysteine 2841, cysteine 2835-cysteine 2851, cysteine 2856-cysteine 2868, cysteine 2863-cysteine 2882, cysteine 2876-cysteine 2895, cysteine 2902-cysteine 2914, cysteine 2909-cysteine 2927, cysteine 2921-cysteine 2936, cysteine 2941-cysteine 2953, cysteine 2949-cysteine 2962, cysteine 2964-cysteine 2977, cysteine 2983-cysteine 2993, cysteine 2989-cysteine 3002, and cysteine 3004-cysteine 3018. The N-linked (GlcNAc...) asparagine glycan is linked to asparagine 2903. The 40-residue stretch at 2939–2978 folds into the EGF-like 11 domain; sequence NECLNKKLSGCSQECEDLKIGYKCRCRPGFRLKDDGKTCI. In terms of domain architecture, EGF-like 12; calcium-binding spans 2979–3019; it reads DIDECSTTYPCSQKCINTLGSYKCLCIEGYKLKPDNPTSCK. Asparagine 3045 and asparagine 3086 each carry an N-linked (GlcNAc...) asparagine glycan. LDL-receptor class B repeat units follow at residues 3066–3110, 3111–3153, 3154–3197, 3198–3240, and 3241–3281; these read QMIY…DWVG, GNLY…DVQN, GYLY…DYIN, SRIY…FEDY, and IYWT…YHPY. N-linked (GlcNAc...) asparagine glycosylation is present at asparagine 3176. A glycan (N-linked (GlcNAc...) asparagine) is linked at asparagine 3261. Positions 3287-3328 constitute an EGF-like 13 domain; that stretch reads PNHPCKTNNAGCSNLCLLSPGGGHKCACPTNFYLGSDGKTCV. 3 disulfide bridges follow: cysteine 3291/cysteine 3302, cysteine 3298/cysteine 3312, and cysteine 3314/cysteine 3327. LDL-receptor class A domains follow at residues 3329–3368, 3369–3407, 3408–3447, 3448–3488, 3489–3530, 3531–3569, 3570–3608, 3608–3646, 3649–3689, 3690–3730, and 3736–3776; these read SNCT…DCPE, FKCR…NCDI, HVCL…DCPE, VTCA…NCTQ, MTCG…ECDE, RTCE…SCTP, RPCS…DCIP, PRCE…DCGT, RTCP…ECLK, FQCP…DCES, and KSCS…SCSH. Asparagine 3330 is a glycosylation site (N-linked (GlcNAc...) asparagine). Intrachain disulfides connect cysteine 3331–cysteine 3343, cysteine 3338–cysteine 3356, cysteine 3350–cysteine 3366, cysteine 3371–cysteine 3383, cysteine 3378–cysteine 3396, cysteine 3390–cysteine 3405, cysteine 3410–cysteine 3423, cysteine 3417–cysteine 3436, cysteine 3430–cysteine 3445, cysteine 3450–cysteine 3463, cysteine 3457–cysteine 3476, cysteine 3470–cysteine 3486, cysteine 3491–cysteine 3504, cysteine 3498–cysteine 3517, cysteine 3511–cysteine 3528, cysteine 3533–cysteine 3545, cysteine 3540–cysteine 3558, cysteine 3552–cysteine 3567, cysteine 3572–cysteine 3584, cysteine 3579–cysteine 3597, cysteine 3591–cysteine 3606, cysteine 3610–cysteine 3622, cysteine 3617–cysteine 3635, cysteine 3629–cysteine 3644, cysteine 3658–cysteine 3676, cysteine 3670–cysteine 3687, cysteine 3692–cysteine 3706, cysteine 3700–cysteine 3719, cysteine 3713–cysteine 3728, cysteine 3738–cysteine 3752, cysteine 3747–cysteine 3765, cysteine 3759–cysteine 3774, cysteine 3783–cysteine 3796, cysteine 3790–cysteine 3805, cysteine 3807–cysteine 3820, cysteine 3826–cysteine 3836, cysteine 3832–cysteine 3845, and cysteine 3847–cysteine 3858. An N-linked (GlcNAc...) asparagine glycan is attached at asparagine 3485. A glycan (N-linked (GlcNAc...) asparagine) is linked at asparagine 3659. 2 consecutive EGF-like domains span residues 3779–3821 and 3822–3859; these read KSYD…NSCQ and DVNE…NMCK. An N-linked (GlcNAc...) asparagine glycan is attached at asparagine 3786. Asparagine 3837 carries an N-linked (GlcNAc...) asparagine glycan. 4 LDL-receptor class B repeats span residues 3910-3952, 3969-4011, 4012-4055, and 4056-4100; these read NKIY…THLN, GNIY…DPLR, GTMY…DYHN, and ERLY…FEDY. The Recognition site for proteolytical processing signature appears at 3939–3942; sequence RNRR. Residue asparagine 3952 is glycosylated (N-linked (GlcNAc...) asparagine). N-linked (GlcNAc...) asparagine glycosylation is found at asparagine 4074 and asparagine 4124. EGF-like domains lie at 4146–4182, 4195–4231, 4231–4267, 4267–4303, 4303–4339, 4339–4374, and 4372–4409; these read VTNP…GTCV, TTDT…ERCQ, QINQ…SRCD, DQQV…DRCQ, QYQQ…AQCQ, QDNK…PSCL, and SCLT…MRCE. Cystine bridges form between cysteine 4150–cysteine 4159, cysteine 4155–cysteine 4168, cysteine 4170–cysteine 4181, cysteine 4199–cysteine 4209, cysteine 4203–cysteine 4219, cysteine 4221–cysteine 4230, cysteine 4235–cysteine 4245, cysteine 4239–cysteine 4255, cysteine 4257–cysteine 4266, cysteine 4271–cysteine 4281, cysteine 4275–cysteine 4291, cysteine 4293–cysteine 4302, cysteine 4307–cysteine 4317, cysteine 4311–cysteine 4327, cysteine 4329–cysteine 4338, cysteine 4343–cysteine 4351, cysteine 4346–cysteine 4362, cysteine 4364–cysteine 4373, cysteine 4376–cysteine 4386, cysteine 4380–cysteine 4397, and cysteine 4399–cysteine 4408. An N-linked (GlcNAc...) asparagine glycan is attached at asparagine 4178. The N-linked (GlcNAc...) asparagine glycan is linked to asparagine 4278. A helical membrane pass occupies residues 4420 to 4443; it reads RTASIVIPILLLLLLLAVVAFAWY. Over 4444-4543 the chain is Cytoplasmic; sequence KWRIKGAKGF…ADDDLTDPLA (100 aa). The short motif at 4501-4506 is the NPXY motif element; the sequence is FTNPVY. The tract at residues 4522–4543 is disordered; the sequence is STDEKRELLARGADDDLTDPLA. The span at 4523 to 4535 shows a compositional bias: basic and acidic residues; the sequence is TDEKRELLARGAD.

The protein belongs to the LDLR family. As to quaternary structure, binds vitellogenin and LRPAP1 (alpha 2-macroglobulin). In terms of processing, cleaved into a 85 kDa membrane-spanning subunit (LRP-85) and a 515 kDa large extracellular domain (LRP-515) that remains non-covalently associated. In terms of tissue distribution, somatic.

The protein resides in the membrane. Its subcellular location is the coated pit. Its function is as follows. Endocytic receptor involved in endocytosis and in phagocytosis of apoptotic cells. Involved in cellular lipid homeostasis. Involved in the plasma clearance of chylomicron remnants and activated LRPAP1 (alpha 2-macroglobulin), as well as the local metabolism of complexes between plasminogen activators and their endogenous inhibitors. Acts as an alpha-2-macroglobulin receptor. The protein is Low-density lipoprotein receptor-related protein 1 (LRP1) of Gallus gallus (Chicken).